A 119-amino-acid chain; its full sequence is Large ribosomal subunit protein uL14 (119 aa).

It belongs to the universal ribosomal protein uL14 family. Part of the 50S ribosomal subunit. Forms a cluster with proteins L3 and L19. In the 70S ribosome, L14 and L19 interact and together make contacts with the 16S rRNA in bridges B5 and B8.

In terms of biological role, binds to 23S rRNA. Forms part of two intersubunit bridges in the 70S ribosome. This chain is Large ribosomal subunit protein uL14, found in Neorickettsia sennetsu (strain ATCC VR-367 / Miyayama) (Ehrlichia sennetsu).